Here is a 78-residue protein sequence, read N- to C-terminus: Large ribosomal subunit protein bL28 (78 aa).

The protein belongs to the bacterial ribosomal protein bL28 family.

The chain is Large ribosomal subunit protein bL28 from Acaryochloris marina (strain MBIC 11017).